An 88-amino-acid polypeptide reads, in one-letter code: MSEATYQRKGRTLVGIVVSDKNDKTIVVRVETLVKHPLLKKYVRRRKKFTAHDPMNECGIGDKVKIIEFRPLSRNKRWHLESILEKAV.

Belongs to the universal ribosomal protein uS17 family. In terms of assembly, part of the 30S ribosomal subunit.

In terms of biological role, one of the primary rRNA binding proteins, it binds specifically to the 5'-end of 16S ribosomal RNA. The sequence is that of Small ribosomal subunit protein uS17 from Nitratidesulfovibrio vulgaris (strain ATCC 29579 / DSM 644 / CCUG 34227 / NCIMB 8303 / VKM B-1760 / Hildenborough) (Desulfovibrio vulgaris).